We begin with the raw amino-acid sequence, 138 residues long: Putative nickel-responsive regulator (138 aa).

The Ni(2+) site is built by His-80, His-91, His-93, and Cys-99.

It belongs to the transcriptional regulatory CopG/NikR family. The cofactor is Ni(2+).

Its function is as follows. Transcriptional regulator. This is Putative nickel-responsive regulator from Campylobacter hominis (strain ATCC BAA-381 / DSM 21671 / CCUG 45161 / LMG 19568 / NCTC 13146 / CH001A).